The following is a 117-amino-acid chain: Nitrogen regulatory protein GlnK1 (117 aa).

ADP is bound by residues Thr-32, 40–42 (GAQ), and 92–95 (GSGK). ATP contacts are provided by residues Thr-32, 40 to 42 (GAQ), and 92 to 95 (GSGK).

This sequence belongs to the P(II) protein family. As to quaternary structure, homotrimer. Interacts and forms stable complexes with the glutamine synthetase GlnA1.

The protein resides in the cytoplasm. Inhibitory effects on GlnA1 are abolished in the presence of the effector 2-oxoglutarate. Functionally, involved in the regulation of nitrogen metabolism. Regulates the activity of its targets by protein-protein interaction in response to the nitrogen status of the cell. Allows finetuning control of the glutamine synthetase GlnA1 under changing nitrogen availabilities via direct protein interaction. The protein is Nitrogen regulatory protein GlnK1 of Methanosarcina mazei (strain ATCC BAA-159 / DSM 3647 / Goe1 / Go1 / JCM 11833 / OCM 88) (Methanosarcina frisia).